The primary structure comprises 97 residues: Large ribosomal subunit protein bL31 (97 aa).

A disordered region spans residues 75 to 97; that stretch reads NKTKKSNQAKVEKQTRHRSINEL. A compositionally biased stretch (basic and acidic residues) spans 84 to 97; that stretch reads KVEKQTRHRSINEL.

Belongs to the bacterial ribosomal protein bL31 family. Type A subfamily. As to quaternary structure, part of the 50S ribosomal subunit.

Binds the 23S rRNA. This chain is Large ribosomal subunit protein bL31, found in Mycoplasma genitalium (strain ATCC 33530 / DSM 19775 / NCTC 10195 / G37) (Mycoplasmoides genitalium).